We begin with the raw amino-acid sequence, 101 residues long: MANITVTFTITEFCLHTGVTEEELNEIVGLGVIEPYEDDNTDWQFDDRAASVVQRALRLREELALDWPGIAVALTLLEENSRLREENRLLLQRLSRFISHP.

This sequence belongs to the CbpM family.

In terms of biological role, interacts with CbpA and inhibits both the DnaJ-like co-chaperone activity and the DNA binding activity of CbpA. Together with CbpA, modulates the activity of the DnaK chaperone system. Does not inhibit the co-chaperone activity of DnaJ. This Salmonella paratyphi A (strain ATCC 9150 / SARB42) protein is Chaperone modulatory protein CbpM.